The following is a 1142-amino-acid chain: Zinc finger MYM-type protein 1 (1142 aa).

A Glycyl lysine isopeptide (Lys-Gly) (interchain with G-Cter in SUMO2) cross-link involves residue lysine 25. 3 MYM-type zinc fingers span residues 110–148 (QLFCSIPCITEYISSASSPVPSKRTCSNCSKDILNPKDV), 160–203 (KTFC…QYEV), and 210–245 (HNLCSNACLSKFHSANNFIMNCCENCGTYCYTSSSL). A Glycyl lysine isopeptide (Lys-Gly) (interchain with G-Cter in SUMO2) cross-link involves residue lysine 284. The MYM-type 4 zinc finger occupies 300-331 (ELFCSINCFSAYSKAKMESSSVSVVSVVHDTS). The span at 385–396 (KSSPSEPSNAVA) shows a compositional bias: polar residues. The tract at residues 385 to 413 (KSSPSEPSNAVASSSTEQPSVSPSSSVFS) is disordered. The span at 397 to 413 (SSSTEQPSVSPSSSVFS) shows a compositional bias: low complexity. Residues 452-538 (KSRSIKKSCC…YQFCDGAVSD (87 aa)) form a TTF-type zinc finger.

It is found in the nucleus. The sequence is that of Zinc finger MYM-type protein 1 (ZMYM1) from Homo sapiens (Human).